We begin with the raw amino-acid sequence, 357 residues long: Sorbitol dehydrogenase 2 (357 aa).

Cysteine 43 contacts Zn(2+). A substrate-binding site is contributed by tyrosine 49. Histidine 68 and glutamate 69 together coordinate Zn(2+). Position 154 (glutamate 154) interacts with substrate. NAD(+) is bound by residues aspartate 202, lysine 207, 275-277, and 299-301; these read VGM and CFR. 2 residues coordinate substrate: arginine 301 and tyrosine 302.

Belongs to the zinc-containing alcohol dehydrogenase family. As to quaternary structure, homotetramer. Zn(2+) serves as cofactor.

It carries out the reaction keto-D-fructose + NADH + H(+) = D-sorbitol + NAD(+). The enzyme catalyses xylitol + NAD(+) = D-xylulose + NADH + H(+). Functionally, polyol dehydrogenase that catalyzes the reversible NAD(+)-dependent oxidation of various sugar alcohols. Is active with D-sorbitol (D-glucitol) and xylitol as substrates, leading to the C2-oxidized product D-fructose and D-xylulose, respectively. The sequence is that of Sorbitol dehydrogenase 2 (SOR2) from Saccharomyces cerevisiae (strain ATCC 204508 / S288c) (Baker's yeast).